The primary structure comprises 834 residues: Inner nuclear membrane protein SRC1 (834 aa).

A disordered region spans residues 68–292; that stretch reads DEGIVKMDRP…TANGTGHSTP (225 aa). Positions 77 to 86 are enriched in low complexity; it reads PSSSPSIASP. Residues S78, S80, and S85 each carry the phosphoserine modification. Acidic residues-rich tracts occupy residues 114–127 and 142–153; these read VSNDDDDDDDDDDD and DTDEVDDEEDDV. The span at 154-170 shows a compositional bias: polar residues; the sequence is ITSSSNKSDTNDFQQNS. At S181 the chain carries Phosphoserine. The segment covering 188–198 has biased composition (basic and acidic residues); sequence NSKENKIDNKH. S203, S204, and S206 each carry phosphoserine. Over residues 243–266 the composition is skewed to polar residues; it reads IKNTNRKPVSMDNFNDSLTSSGTE. Phosphoserine is present on S301. Positions 307–364 are disordered; the sequence is PQKEVPSTILVPEVEQQEPSQSERTPSLFSSEGSGSESEAPLLPEITTPGPHQPMGNT. 2 stretches are compositionally biased toward low complexity: residues 317 to 329 and 336 to 345; these read VPEVEQQEPSQSE and SSEGSGSESE. Residue T394 is modified to Phosphothreonine. A Phosphoserine modification is found at S427. The next 2 membrane-spanning stretches (helical) occupy residues 455 to 475 and 708 to 728; these read LLALFLFCIFIVIPLLFGLWY and IWLMFLLIVISKVIEIKLKNY.

Its subcellular location is the nucleus inner membrane. In terms of biological role, plays a role in sister chromatid separation. The protein is Inner nuclear membrane protein SRC1 (SRC1) of Saccharomyces cerevisiae (strain ATCC 204508 / S288c) (Baker's yeast).